A 137-amino-acid polypeptide reads, in one-letter code: Mediator of RNA polymerase II transcription subunit 21 (137 aa).

The interval 37-56 (PKDTIAPSKADQPPEVDTLP) is disordered. Positions 87 to 130 (GLDNSEQDQLQSIKELEEELNVAEKQRQEAVKEKDEVLVKLDQT) form a coiled coil.

The protein belongs to the Mediator complex subunit 21 family. Component of the Mediator complex.

The protein localises to the nucleus. In terms of biological role, component of the Mediator complex, a coactivator involved in the regulated transcription of nearly all RNA polymerase II-dependent genes. Mediator functions as a bridge to convey information from gene-specific regulatory proteins to the basal RNA polymerase II transcription machinery. Mediator is recruited to promoters by direct interactions with regulatory proteins and serves as a scaffold for the assembly of a functional preinitiation complex with RNA polymerase II and the general transcription factors. The protein is Mediator of RNA polymerase II transcription subunit 21 (srb-7) of Neurospora crassa (strain ATCC 24698 / 74-OR23-1A / CBS 708.71 / DSM 1257 / FGSC 987).